Reading from the N-terminus, the 101-residue chain is Protein SSXA1 (101 aa).

Residues 19-83 (ETCQAFEDIS…ERVTKSVLSD (65 aa)) form the KRAB-related domain. The segment at 73–101 (KERVTKSVLSDSDEVSSHESQDKRKNPVV) is disordered. A compositionally biased stretch (basic and acidic residues) spans 87–101 (VSSHESQDKRKNPVV).

The protein belongs to the SSX family. In terms of tissue distribution, specifically expressed in testis (at protein level). Not detected in other tissues tested (at protein level).

Its subcellular location is the nucleus. In terms of biological role, could act as a modulator of transcription. The protein is Protein SSXA1 of Mus musculus (Mouse).